Reading from the N-terminus, the 188-residue chain is MATTSDLAKGVILRFNGNLHILEEISHHTPGNKRGFYQAKMRNLRNGRIVENKFRSGEAVEIVSTERRKHQYLYQDGLDYVMMDGDTYEQLHISNELIGEQAKFLKESMEVDLVFTTDGEIIQAEVPVFVELEVTETDPTTKDDRANSGTKPATMETGAIIQVPMFVQNGDFIRIDTRTGEYIERAKK.

It belongs to the elongation factor P family.

It is found in the cytoplasm. It participates in protein biosynthesis; polypeptide chain elongation. Its function is as follows. Involved in peptide bond synthesis. Stimulates efficient translation and peptide-bond synthesis on native or reconstituted 70S ribosomes in vitro. Probably functions indirectly by altering the affinity of the ribosome for aminoacyl-tRNA, thus increasing their reactivity as acceptors for peptidyl transferase. This is Elongation factor P from Chloroherpeton thalassium (strain ATCC 35110 / GB-78).